Reading from the N-terminus, the 564-residue chain is MVLFIILAILVVILIAIGVLFYMRSNKRNLIEKTEERKNEIEQLPLDDNLRKLTGLNLKGETKTKYDAMKKDNTETTNKYLAPVEEKIQNAEELLEKFKFTAAQTEIDDAHELMDQYEENYQHQVTQVDDIINLHKENEALYEKCKVDYREMKRDVLANRHQFGEAAEPLENEIENYEPKLNEYENLKSEGNYVQAHNHIAALEDQIKNLKSYMDEIPELIRETQKELPGQFQDLKYGCRDLKVEGYDLDHVKVDGTIQSLKTELSFVEPMISRLELDEANNKLENINDKLDEMYDLIEYEVKAKNEVEETKDIITDDLFKAKDMNYTLQTEIEYVRENYYINESDAQSVRQFENEIQSLISVYDDILKETSKSAVRYSEVQDNLQYLEDHVSVINKEQDKLQNHLIQLREDEAEAEDNLLRVQSKKEEVYRRLLASNLTSVPERFIIMKNEIDNEVREVNEQFRERPIHVKQLKDKVAKIVIQMNTFEDEANDVLVNAVYAEKLIQYGNRYRKDHHHVDKSLNEAERLFKNNRYKRAIEIAEEALESVEPGITKHIEEQVIKE.

Topologically, residues 1–4 are extracellular; sequence MVLF. A helical membrane pass occupies residues 5–23; sequence IILAILVVILIAIGVLFYM. The Cytoplasmic segment spans residues 24-564; sequence RSNKRNLIEK…KHIEEQVIKE (541 aa). 4 coiled-coil regions span residues 84–126, 165–223, 271–303, and 350–435; these read VEEK…HQVT, EAAE…LIRE, MISR…YEVK, and VRQF…RRLL.

It belongs to the EzrA family.

Its subcellular location is the cell membrane. Negative regulator of FtsZ ring formation; modulates the frequency and position of FtsZ ring formation. Inhibits FtsZ ring formation at polar sites. Interacts either with FtsZ or with one of its binding partners to promote depolymerization. This chain is Septation ring formation regulator EzrA, found in Staphylococcus epidermidis (strain ATCC 12228 / FDA PCI 1200).